Reading from the N-terminus, the 131-residue chain is Small ribosomal subunit protein uS8 (131 aa).

It belongs to the universal ribosomal protein uS8 family. In terms of assembly, part of the 30S ribosomal subunit. Contacts proteins S5 and S12.

In terms of biological role, one of the primary rRNA binding proteins, it binds directly to 16S rRNA central domain where it helps coordinate assembly of the platform of the 30S subunit. The chain is Small ribosomal subunit protein uS8 from Parabacteroides distasonis (strain ATCC 8503 / DSM 20701 / CIP 104284 / JCM 5825 / NCTC 11152).